Reading from the N-terminus, the 674-residue chain is Dystrophia myotonica WD repeat-containing protein (674 aa).

Position 2 is an N-acetylalanine (Ala-2). Disordered stretches follow at residues 31 to 92 (GFYK…PALP) and 103 to 122 (EPDSAGAGEPPATPAGLGSG). The span at 53 to 65 (PVPPQPPQPPPGP) shows a compositional bias: pro residues. A compositionally biased stretch (low complexity) spans 66–77 (ASASGPGAAGPA). Positions 78 to 90 (SSPPPAGPGPGPA) are enriched in pro residues. Residues 107-118 (AGAGEPPATPAG) are compositionally biased toward low complexity. WD repeat units lie at residues 211–251 (IDKT…ASAP), 282–321 (VGEGPLNEFAFSPDGRHLACVSQDGCLRVFHFDSMLLRGL), 324–363 (SYFGGLLCVCWSPDGRYVVTGGEDDLVTVWSFTEGRVVAR), 366–409 (GHKS…EAAG), and 413–453 (AGGA…LYPH). Disordered regions lie at residues 384 to 419 (EEAATAAGADGERSGEEEEEEPEAAGTGSAGGAPLS), 456 to 516 (LART…EPGT), 532 to 573 (RDRG…RSRL), and 637 to 674 (DEETEAQTGEGSWPRSPSKSVVEGISSQPGNSPSGTVV). Composition is skewed to low complexity over residues 457-478 (ARTRTLPGTPGTTPPAASSSRG) and 487-499 (PRSLSRSNSLPHP). At Ser-495 the chain carries Phosphoserine. 2 stretches are compositionally biased toward gly residues: residues 500–509 (AGGGKAGGPG) and 550–563 (SRGGSGGSGSGGEK). Residue Arg-551 is modified to Omega-N-methylarginine. One copy of the WD 6 repeat lies at 601–638 (IAQERLTVLLFLEDCIITACQEGLICTWARPGKAFTDE). A compositionally biased stretch (polar residues) spans 642 to 674 (AQTGEGSWPRSPSKSVVEGISSQPGNSPSGTVV).

In terms of assembly, component of the USP12/DMWD/WDR48 deubiquitinating complex. Interacts with USP12; promotes its enzymatic activity. Interacts with USP46.

Its subcellular location is the cytoplasm. It is found in the nucleus. The protein resides in the perikaryon. It localises to the cell projection. The protein localises to the dendrite. Regulator of the deubiquitinating USP12/DMWD/WDR48 complex. Functions as a cofactor that promotes USP12 enzymatic activity. This is Dystrophia myotonica WD repeat-containing protein from Homo sapiens (Human).